A 478-amino-acid chain; its full sequence is Sulfate adenylyltransferase subunit 1 (478 aa).

One can recognise a tr-type G domain in the interval 24–240 (KSLLRFLTCG…VLENVDIDAD (217 aa)). Residues 33–40 (GSVDDGKS) form a G1 region. 33–40 (GSVDDGKS) is a GTP binding site. The interval 91–95 (GITID) is G2. Residues 112-115 (DTPG) are G3. GTP-binding positions include 112–116 (DTPGH) and 167–170 (NKMD). The interval 167–170 (NKMD) is G4. The tract at residues 206 to 208 (SAL) is G5.

Belongs to the TRAFAC class translation factor GTPase superfamily. Classic translation factor GTPase family. CysN/NodQ subfamily. In terms of assembly, heterodimer composed of CysD, the smaller subunit, and CysN.

The catalysed reaction is sulfate + ATP + H(+) = adenosine 5'-phosphosulfate + diphosphate. It functions in the pathway sulfur metabolism; hydrogen sulfide biosynthesis; sulfite from sulfate: step 1/3. Functionally, with CysD forms the ATP sulfurylase (ATPS) that catalyzes the adenylation of sulfate producing adenosine 5'-phosphosulfate (APS) and diphosphate, the first enzymatic step in sulfur assimilation pathway. APS synthesis involves the formation of a high-energy phosphoric-sulfuric acid anhydride bond driven by GTP hydrolysis by CysN coupled to ATP hydrolysis by CysD. This is Sulfate adenylyltransferase subunit 1 from Aliivibrio fischeri (strain MJ11) (Vibrio fischeri).